A 442-amino-acid chain; its full sequence is Putative protein YjbI (442 aa).

The polypeptide is Putative protein YjbI (yjbI) (Escherichia coli (strain K12)).